A 226-amino-acid chain; its full sequence is Teichuronic acid biosynthesis protein TuaF (226 aa).

Transmembrane regions (helical) follow at residues 15 to 35 (NIIWIIAVPIILGAAGYILPS) and 202 to 222 (VLGVMIGLTIAFMFVVIPEFF).

Its subcellular location is the cell membrane. It functions in the pathway cell wall biogenesis; teichuronic acid biosynthesis. The sequence is that of Teichuronic acid biosynthesis protein TuaF (tuaF) from Bacillus subtilis (strain 168).